We begin with the raw amino-acid sequence, 336 residues long: Dihydroorotate dehydrogenase (quinone) (336 aa).

FMN-binding positions include 62 to 66 (AGLDK) and threonine 86. Lysine 66 provides a ligand contact to substrate. 111-115 (NRMGF) contributes to the substrate binding site. FMN-binding residues include asparagine 139 and asparagine 172. Asparagine 172 contributes to the substrate binding site. The Nucleophile role is filled by serine 175. Position 177 (asparagine 177) interacts with substrate. Lysine 217 and threonine 245 together coordinate FMN. 246 to 247 (NT) contributes to the substrate binding site. Residues glycine 268, glycine 297, and 318-319 (YS) each bind FMN.

This sequence belongs to the dihydroorotate dehydrogenase family. Type 2 subfamily. Monomer. FMN is required as a cofactor.

The protein resides in the cell membrane. The catalysed reaction is (S)-dihydroorotate + a quinone = orotate + a quinol. It functions in the pathway pyrimidine metabolism; UMP biosynthesis via de novo pathway; orotate from (S)-dihydroorotate (quinone route): step 1/1. Functionally, catalyzes the conversion of dihydroorotate to orotate with quinone as electron acceptor. This is Dihydroorotate dehydrogenase (quinone) from Vibrio vulnificus (strain YJ016).